Consider the following 354-residue polypeptide: Glycerol-3-phosphate dehydrogenase [NAD(+)], glycosomal (354 aa).

Residues 15-20 (GSGAFG), Phe90, Lys118, and Ala150 each bind NAD(+). Lys118 contacts substrate. The Proton acceptor role is filled by Lys203. 2 residues coordinate NAD(+): Arg267 and Glu293. Position 267–268 (267–268 (RN)) interacts with substrate. The Microbody targeting signal signature appears at 352-354 (SKM).

This sequence belongs to the NAD-dependent glycerol-3-phosphate dehydrogenase family.

Its subcellular location is the glycosome. The catalysed reaction is sn-glycerol 3-phosphate + NAD(+) = dihydroxyacetone phosphate + NADH + H(+). This chain is Glycerol-3-phosphate dehydrogenase [NAD(+)], glycosomal (GPD), found in Trypanosoma brucei brucei.